Here is a 1098-residue protein sequence, read N- to C-terminus: Transcription elongation regulator 1 (1098 aa).

Residues 1-15 show a composition bias toward basic and acidic residues; sequence MAERGGDGGESERFN. The tract at residues 1–105 is disordered; the sequence is MAERGGDGGE…RPPFMPPPMS (105 aa). S11 is modified (phosphoserine). The residue at position 20 (R20) is an Omega-N-methylarginine. Asymmetric dimethylarginine is present on residues R28, R30, R41, and R48. A compositionally biased stretch (pro residues) spans 32–105; that stretch reads PAPPPNAVMR…RPPFMPPPMS (74 aa). Residues 131–164 enclose the WW 1 domain; it reads PPTEEIWVENKTPDGKVYYYNARTRESAWTKPDG. Positions 184 to 244 form a coiled coil; that stretch reads QAQAQAQAQA…AQAQAQAQVQ (61 aa). Positions 259–333 are enriched in low complexity; the sequence is STPTTSSPAP…PTATPVQTVP (75 aa). Residues 259-348 are disordered; it reads STPTTSSPAP…TLPPAVPHSV (90 aa). A compositionally biased stretch (pro residues) spans 334 to 344; it reads QPHPQTLPPAV. The WW 2 domain occupies 429–462; that stretch reads ATAVSEWTEYKTADGKTYYYNNRTLESTWEKPQE. 2 stretches are compositionally biased toward basic and acidic residues: residues 469–481 and 496–506; these read LEEKIKEPIKEPS and EEPIKEIKEEP. Residues 469 to 526 are disordered; it reads LEEKIKEPIKEPSEEPLPMETEEEDPKEEPIKEIKEEPKEEEMTEEEKAAQKAKPVAT. Glycyl lysine isopeptide (Lys-Gly) (interchain with G-Cter in SUMO2) cross-links involve residues K503 and K507. The WW 3 domain maps to 528–561; it reads PIPGTPWCVVWTGDERVFFYNPTTRLSMWDRPDD. Residues 606–655 adopt a coiled-coil conformation; that stretch reads AIKEEQELMEEINEDEPVKAKKRKRDDNKDIDSEKEAAMEAEIKAARERA. K608 is covalently cross-linked (Glycyl lysine isopeptide (Lys-Gly) (interchain with G-Cter in SUMO2)). Residues 615-640 form a disordered region; sequence EEINEDEPVKAKKRKRDDNKDIDSEK. Positions 626–630 match the Nuclear localization signal motif; the sequence is KKRKR. Basic and acidic residues predominate over residues 630 to 640; sequence RDDNKDIDSEK. S638 carries the post-translational modification Phosphoserine. FF domains lie at 659–712, 725–779, and 791–846; these read LEAR…YVKT, IMQA…FVAA, and RGEK…YIEK. Phosphoserine is present on S834. The stretch at 844–906 forms a coiled coil; it reads IEKIAKNLDS…EEAIQNFKAL (63 aa). Residues 870 to 895 form a disordered region; sequence REREREVQKARSEQTKEIDREREQHK. FF domains are found at residues 896 to 952, 954 to 1010, and 1012 to 1077; these read REEA…HIEA, TKKK…YIRD, and YITA…YVDD. S933 carries the phosphoserine modification. The interval 1076 to 1098 is disordered; sequence DDLDRRGPPPPPTASEPTRRSTK.

In terms of assembly, binds formin. Interacts (via the second WW domain) with TREX1 (via proline-rich region). Binds RNA polymerase II, HD and SF1. Detected in brain neurons.

It localises to the nucleus. In terms of biological role, transcription factor that binds RNA polymerase II and inhibits the elongation of transcripts from target promoters. Regulates transcription elongation in a TATA box-dependent manner. Necessary for TAT-dependent activation of the human immunodeficiency virus type 1 (HIV-1) promoter. The sequence is that of Transcription elongation regulator 1 (TCERG1) from Homo sapiens (Human).